The chain runs to 473 residues: Xylan O-acetyltransferase 14 (473 aa).

A compositionally biased stretch (polar residues) spans 1–17 (MTTTGSTPPRKNRSNVT). The disordered stretch occupies residues 1-22 (MTTTGSTPPRKNRSNVTGGEGG). At 1–54 (MTTTGSTPPRKNRSNVTGGEGGSLEEYAWRAAGEAAAAKKATRAWGVSVSLRSH) the chain is on the cytoplasmic side. The helical; Signal-anchor for type II membrane protein transmembrane segment at 55 to 75 (FSSLVLLLLLLLVALAVSATT) threads the bilayer. The segment at 76-101 (KNGDPAETPHAPPLPPPASIKLPSSS) is disordered. Residues 76 to 473 (KNGDPAETPH…NQLLYAHIVS (398 aa)) lie on the Lumenal side of the membrane. Cystine bridges form between Cys-108-Cys-159, Cys-130-Cys-195, Cys-139-Cys-455, and Cys-370-Cys-451. Positions 182–184 (GDS) match the GDS motif motif. Residue Ser-184 is the Nucleophile of the active site. 3 N-linked (GlcNAc...) asparagine glycosylation sites follow: Asn-209, Asn-223, and Asn-414. Asp-450 serves as the catalytic Proton donor. The DXXH motif motif lies at 450-453 (DCIH). His-453 functions as the Proton acceptor in the catalytic mechanism.

This sequence belongs to the PC-esterase family. TBL subfamily.

The protein localises to the golgi apparatus membrane. Xylan acetyltransferase required for 2-O- and 3-O-monoacetylation of xylosyl residues in xylan. Catalyzes the 2-O-acetylation of xylan, followed by nonenzymatic acetyl migration to the O-3 position, resulting in products that are monoacetylated at both O-2 and O-3 positions. The chain is Xylan O-acetyltransferase 14 from Oryza sativa subsp. japonica (Rice).